The chain runs to 258 residues: Glucanase inhibitor protein 1 (258 aa).

An N-terminal signal peptide occupies residues 1–19 (MRVVPTLAAASLALGAVAG). Residues 27–254 (ILGGGEVPIG…AIEWITSVTK (228 aa)) enclose the Peptidase S1 domain. C54 and C70 are disulfide-bonded. 5 N-linked (GlcNAc...) asparagine glycosylation sites follow: N87, N102, N107, N157, and N185. 2 disulfide bridges follow: C177-C189 and C199-C230.

This sequence belongs to the peptidase S1 family. In terms of assembly, forms an apoplastic complex with host endoglucanases in tomato leaves during P.infestans infection.

Its subcellular location is the secreted. Its function is as follows. Secreted effector that suppresses host plant glucan elicitor-mediated defense responses. Targets host endoglucanases and inhibits the endoglucanase-mediated release of elicitor-active glucan oligosaccharides from P.infestans cell walls. This is Glucanase inhibitor protein 1 from Phytophthora infestans (Potato late blight agent).